A 266-amino-acid polypeptide reads, in one-letter code: Ras-like protein family member 12 (266 aa).

Residues 27–34 (GRRGAGKS), 74–78 (DTADL), and 134–137 (NKLD) each bind GTP.

The protein belongs to the small GTPase superfamily. Ras family.

The enzyme catalyses GTP + H2O = GDP + phosphate + H(+). The chain is Ras-like protein family member 12 (RASL12) from Homo sapiens (Human).